Consider the following 405-residue polypeptide: Imidazolonepropionase (405 aa).

Fe(3+)-binding residues include His-72 and His-74. Residues His-72 and His-74 each contribute to the Zn(2+) site. Residues Arg-81, Tyr-144, and His-177 each coordinate 4-imidazolone-5-propanoate. Tyr-144 provides a ligand contact to N-formimidoyl-L-glutamate. A Fe(3+)-binding site is contributed by His-242. His-242 serves as a coordination point for Zn(2+). Residue Gln-245 participates in 4-imidazolone-5-propanoate binding. Asp-317 is a Fe(3+) binding site. Zn(2+) is bound at residue Asp-317. Asn-319 and Gly-321 together coordinate N-formimidoyl-L-glutamate. Residue Thr-322 coordinates 4-imidazolone-5-propanoate.

Belongs to the metallo-dependent hydrolases superfamily. HutI family. Requires Zn(2+) as cofactor. It depends on Fe(3+) as a cofactor.

The protein localises to the cytoplasm. It carries out the reaction 4-imidazolone-5-propanoate + H2O = N-formimidoyl-L-glutamate. The protein operates within amino-acid degradation; L-histidine degradation into L-glutamate; N-formimidoyl-L-glutamate from L-histidine: step 3/3. In terms of biological role, catalyzes the hydrolytic cleavage of the carbon-nitrogen bond in imidazolone-5-propanoate to yield N-formimidoyl-L-glutamate. It is the third step in the universal histidine degradation pathway. The sequence is that of Imidazolonepropionase from Klebsiella pneumoniae subsp. pneumoniae (strain ATCC 700721 / MGH 78578).